We begin with the raw amino-acid sequence, 313 residues long: 3'-5' exoribonuclease YhaM (313 aa).

The OB DNA-binding region spans 22 to 90 (SSVKGTASNG…QLKIRQIRQA (69 aa)). One can recognise an HD domain in the interval 163–279 (HVVSMLRLAK…LHQIDLMDAS (117 aa)).

The protein belongs to the YhaM family.

Functionally, shows a 3'-5' exoribonuclease activity. The protein is 3'-5' exoribonuclease YhaM of Listeria monocytogenes serovar 1/2a (strain ATCC BAA-679 / EGD-e).